A 561-amino-acid chain; its full sequence is Nephronectin (561 aa).

A signal peptide spans 1-19; that stretch reads MAVLLAAVLASSLYLQVAA. One can recognise an EGF-like 1 domain in the interval 52 to 87; sequence SWGQCQPVCQPQCKHGECVGPNKCKCHPGFAGKTCN. Disulfide bonds link Cys-56–Cys-69, Cys-60–Cys-75, Cys-77–Cys-86, Cys-93–Cys-104, Cys-100–Cys-113, and Cys-115–Cys-127. One can recognise an EGF-like 2; calcium-binding domain in the interval 89–128; it reads DLNECGLKPRPCKHRCMNTFGSYKCYCLNGYMLLPDGSCS. The EGF-like 3 domain occupies 132–168; that stretch reads SCSMANCQYGCDVVKGQVRCQCPSPGLQLAPDGRTCV. The 45-residue stretch at 169–213 folds into the EGF-like 4; calcium-binding domain; the sequence is DIDECATGRVSCPRFRQCVNTFGSYICKCHTGFDLMYIGGKYQCH. Disulfide bonds link Cys-173–Cys-186, Cys-180–Cys-195, Cys-197–Cys-212, Cys-218–Cys-231, Cys-225–Cys-240, and Cys-242–Cys-253. The region spanning 214–254 is the EGF-like 5; calcium-binding domain; sequence DIDECSLGQHQCSSYARCYNIHGSYKCQCRDGYEGDGLNCV. The disordered stretch occupies residues 266 to 370; sequence PIHMPERNGT…TSTTTRVITV (105 aa). Residues 307-316 show a composition bias toward low complexity; sequence TNRPTSKPTT. Pro residues predominate over residues 317–348; it reads RPTPNPTPQPTPPPPPPLPTEPRTTPLPPTPE. Residues 352-366 show a composition bias toward low complexity; it reads TRPTTIAPATSTTTR. Positions 382–384 match the Integrin interaction motif; it reads RGD. The 142-residue stretch at 420 to 561 folds into the MAM domain; it reads HSCNFDHGLC…DDVSLKRGRC (142 aa).

Belongs to the nephronectin family. In terms of assembly, homodimer and homotrimer. As to expression, expressed in kidney (at protein level).

It localises to the secreted. Its subcellular location is the extracellular space. The protein localises to the extracellular matrix. Functionally, functional ligand of integrin alpha-8/beta-1 in kidney development. Regulates the expression of GDNF with integrin alpha-8/beta-1 which is essential for kidney development. May also play a role in the development and function of various tissues, regulating cell adhesion, spreading and survival through the binding of several integrins. This is Nephronectin (Npnt) from Mus musculus (Mouse).